A 463-amino-acid chain; its full sequence is O-phospho-L-seryl-tRNA:Cys-tRNA synthase 2 (463 aa).

Residues 154-155, Asn259, and 282-284 each bind pyridoxal 5'-phosphate; these read AR and SGH. An N6-(pyridoxal phosphate)lysine modification is found at Lys285.

The protein belongs to the SepCysS family. In terms of assembly, homodimer. Interacts with SepRS. It depends on pyridoxal 5'-phosphate as a cofactor.

It catalyses the reaction O-phospho-L-seryl-tRNA(Cys) + hydrogen sulfide + H(+) = L-cysteinyl-tRNA(Cys) + phosphate. In terms of biological role, converts O-phospho-L-seryl-tRNA(Cys) (Sep-tRNA(Cys)) to L-cysteinyl-tRNA(Cys) (Cys-tRNA(Cys)). In Methanocella arvoryzae (strain DSM 22066 / NBRC 105507 / MRE50), this protein is O-phospho-L-seryl-tRNA:Cys-tRNA synthase 2.